A 520-amino-acid polypeptide reads, in one-letter code: Transactivator/viroplasmin protein (520 aa).

2 disordered regions span residues 32-51 (GSSQ…KEEA) and 487-520 (QDAS…KQVD). The span at 40–51 (SLHRETPEKEEA) shows a compositional bias: basic and acidic residues.

Belongs to the caulimoviridae viroplasmin family.

It is found in the host cytoplasm. In terms of biological role, enhances the ribosomal termination-reinitiation event leading to the translation of major open reading frames on the polycistronic viral RNAs. This chain is Transactivator/viroplasmin protein, found in Arabidopsis thaliana (Mouse-ear cress).